A 73-amino-acid chain; its full sequence is Bacterioferritin-associated ferredoxin (73 aa).

Cysteine 4 and cysteine 6 together coordinate [2Fe-2S] cluster. Arginine 26 and arginine 29 together coordinate phosphate. Positions 38 and 41 each coordinate [2Fe-2S] cluster. Lysine 46 contacts phosphate.

It belongs to the Bfd family. Monomer. Interacts with BfrB; up to 12 Bfd proteins can bind to the BfrB bacterioferritin complex (BFR). One Bfd protein binds to a BfrB dimer in the BFR, with the [2Fe-2S] cluster positioned about 22 Angstroms above the heme of BfrB. Does not interact with FtnA. [2Fe-2S] cluster is required as a cofactor. It depends on phosphate as a cofactor.

Functionally, required for mobilization of iron from the bacterioferritin (BFR) complex, composed of BfrB and FtnA in varying proportions; mobilization requires the [2Fe-2S] cluster of this protein. Reduction of the BfrB heme group occurs in the presence of Bfd, strongly suggesting that the BfrB-Bfd complex allows heme to mediate electron transfer from FPR to the Fe(3+) iron core in the BFR prior to its release as Fe(2+). The protein is Bacterioferritin-associated ferredoxin of Pseudomonas aeruginosa (strain ATCC 15692 / DSM 22644 / CIP 104116 / JCM 14847 / LMG 12228 / 1C / PRS 101 / PAO1).